The sequence spans 1207 residues: Histidine kinase 1 (1207 aa).

A compositionally biased stretch (polar residues) spans 1 to 10 (MRGDSFSMSI). Residues 1-20 (MRGDSFSMSIENLPDSPMGS) are disordered. At 1 to 81 (MRGDSFSMSI…SSYYSVFVVR (81 aa)) the chain is on the cytoplasmic side. A helical membrane pass occupies residues 82-102 (LAIMVMLAILIGLLTVLTWHF). The Extracellular portion of the chain corresponds to 103 to 446 (TRIYTKQSLQ…GKVDERAFKT (344 aa)). A helical membrane pass occupies residues 447–467 (LIILISASVCIFFIGCVCILI). At 468-1207 (LTNGVSKEMK…PSAFQTSLSA (740 aa)) the chain is on the cytoplasmic side. A Histidine kinase domain is found at 505–763 (NMSHELRTPM…LMRLYLILST (259 aa)). Phosphohistidine; by autocatalysis is present on His-508. 2 disordered regions span residues 964–987 (DTCS…VKPS) and 1000–1021 (DATT…PEEE). Basic and acidic residues predominate over residues 975–984 (SGEKQVDKSV). Residues 1000–1014 (DATTSNDDSTSASMT) are compositionally biased toward low complexity. The Response regulatory domain occupies 1045 to 1196 (RILLAEDTPV…LMVSTILSLT (152 aa)). Asp-1127 bears the 4-aspartylphosphate mark.

As to quaternary structure, interacts with AHP2, depending of the phosphorylation state of Asp-1075 in the receiver domain, but probably not with AHP1 and AHP3. Post-translationally, autophosphorylated predominantly on His residues. Activation probably requires a transfer of a phosphate group between a His in the transmitter domain and an Asp of the receiver domain. In terms of tissue distribution, mostly expressed in roots, and, to a lower extent, in stems, leaves and flowers.

The protein resides in the cell membrane. The catalysed reaction is ATP + protein L-histidine = ADP + protein N-phospho-L-histidine.. Its function is as follows. Functions as an osmosensor histidine kinase that detects water stress and transmits the stress signal to a downstream MAPK cascade. This protein undergoes an ATP-dependent autophosphorylation at a conserved histidine residue in the kinase core, and a phosphoryl group is then transferred to a conserved aspartate residue in the receiver domain. Positive regulator of drought and salt stress responses, and abscisic acid (ABA) signaling. Confers drought tolerance, probably by regulating levels of ABA accumulation. Plays a redundant role in regulating plant growth and development. Required for the regulation of desiccation processes during seed formation. In Arabidopsis thaliana (Mouse-ear cress), this protein is Histidine kinase 1 (AHK1).